Consider the following 494-residue polypeptide: mRNA decay activator protein ZFP36L2 (494 aa).

A Phosphoserine modification is found at Ser-57. The disordered stretch occupies residues 93-113 (GGPTSYGTLKEPSGGGGTALL). The residue at position 125 (Ser-125) is a Phosphoserine. Positions 153–158 (RYKTEL) match the RNA-binding motif. 2 consecutive C3H1-type zinc fingers follow at residues 153-181 (RYKT…HGFH) and 191-219 (KYKT…HNAD). Positions 170–211 (YGEKCQFAHGFHELRSLTRHPKYKTELCRTFHTIGFCPYGPR) are RNA-binding. Phosphothreonine is present on Thr-238. 2 disordered regions span residues 257–293 (SLSF…PPSC) and 397–494 (QQQQ…ISDD). A compositionally biased stretch (pro residues) spans 406–415 (PAQPPAPPSA). 2 stretches are compositionally biased toward low complexity: residues 416–435 (TLPA…QLPR) and 459–478 (YLSG…PSLD). A phosphoserine; by RPS6KA1 mark is found at Ser-490 and Ser-492.

As to quaternary structure, associates with the cytoplasmic CCR4-NOT deadenylase to trigger ARE-containing mRNA deadenylation and decay processes. Interacts with CNOT7; this interaction is inhibited in response to phorbol 12-myristate 13-acetate (PMA) treatment in a p38 MAPK-dependent manner. Interacts with CNOT6L. Post-translationally, phosphorylated by RPS6KA1 at Ser-490 and Ser-492 upon phorbol 12-myristate 13-acetate (PMA) treatment; this phosphorylation results in dissociation of the CCR4-NOT-deadenylase complex and induces p38 MAPK-mediated stabilization of the low-density lipoprotein (LDL) receptor (LDLR) mRNA. Phosphorylation occurs during early preadipocyte differentiation. Expressed mainly in the basal epidermal layer, weakly in the suprabasal epidermal layers. Expressed in epidermal keratinocytes (at protein level). Expressed in oocytes.

It localises to the nucleus. The protein localises to the cytoplasm. Zinc-finger RNA-binding protein that destabilizes several cytoplasmic AU-rich element (ARE)-containing mRNA transcripts by promoting their poly(A) tail removal or deadenylation, and hence provide a mechanism for attenuating protein synthesis. Acts as a 3'-untranslated region (UTR) ARE mRNA-binding adapter protein to communicate signaling events to the mRNA decay machinery. Functions by recruiting the CCR4-NOT deadenylase complex and probably other components of the cytoplasmic RNA decay machinery to the bound ARE-containing mRNAs, and hence promotes ARE-mediated mRNA deadenylation and decay processes. Binds to 3'-UTR ARE of numerous mRNAs. Promotes ARE-containing mRNA decay of the low-density lipoprotein (LDL) receptor (LDLR) mRNA in response to phorbol 12-myristate 13-acetate (PMA) treatment in a p38 MAPK-dependent manner. Positively regulates early adipogenesis by promoting ARE-mediated mRNA decay of immediate early genes (IEGs). Plays a role in mature peripheral neuron integrity by promoting ARE-containing mRNA decay of the transcriptional repressor REST mRNA. Plays a role in ovulation and oocyte meiotic maturation by promoting ARE-mediated mRNA decay of the luteinizing hormone receptor LHCGR mRNA. Acts as a negative regulator of erythroid cell differentiation: promotes glucocorticoid-induced self-renewal of erythroid cells by binding mRNAs that are induced or highly expressed during terminal erythroid differentiation and promotes their degradation, preventing erythroid cell differentiation. In association with ZFP36L1 maintains quiescence on developing B lymphocytes by promoting ARE-mediated decay of several mRNAs encoding cell cycle regulators that help B cells progress through the cell cycle, and hence ensuring accurate variable-diversity-joining (VDJ) recombination process and functional immune cell formation. Together with ZFP36L1 is also necessary for thymocyte development and prevention of T-cell acute lymphoblastic leukemia (T-ALL) transformation by promoting ARE-mediated mRNA decay of the oncogenic transcription factor NOTCH1 mRNA. The chain is mRNA decay activator protein ZFP36L2 from Homo sapiens (Human).